Reading from the N-terminus, the 443-residue chain is MVLDSLGKALSNALKKIARAGSVDEALVKEVVRDIQRALIQADVNVRLVLKLTKEIQRRALEEKPPAGISKKEHIIKIVYEELTKFLGTEAKPIEIKEKPTILLMVGVQGSGKTTTVAKLARHFQKRGYKVGVVCSDTWRPGAYHQLKQLLDPYHIEVFGDPNEKDAIKLAKEGVEHFKAKGVDLIIVDTAGRHKEEKDLIEEMRMISNEIKPHEVILVIDGTIGQQAYNQALAFKEATPIGSIIVTKLDSSAKGGGALSAVAATGAPIKFIGTGEKIDDLEPFDPARFVSRLLGLGDIQGLLEKFKELEKEVEFTEEDLERFLKGKFTLKDMYAQLEAMRKMGPLKQILRMIPGLGYSLPDEVISVGEERLRKFKVIMDSMTEEELMNPDIINYSRIKRIARGSGTSVKDVKELLNQYNQMKKFFKSMNKRQLLRLARRFGM.

GTP-binding positions include 107–114 (GVQGSGKT), 189–193 (DTAGR), and 247–250 (TKLD).

The protein belongs to the GTP-binding SRP family. SRP54 subfamily. In terms of assembly, part of the signal recognition particle protein translocation system, which is composed of SRP and FtsY. Archaeal SRP consists of a 7S RNA molecule of 300 nucleotides and two protein subunits: SRP54 and SRP19.

It is found in the cytoplasm. It catalyses the reaction GTP + H2O = GDP + phosphate + H(+). In terms of biological role, involved in targeting and insertion of nascent membrane proteins into the cytoplasmic membrane. Binds to the hydrophobic signal sequence of the ribosome-nascent chain (RNC) as it emerges from the ribosomes. The SRP-RNC complex is then targeted to the cytoplasmic membrane where it interacts with the SRP receptor FtsY. In Pyrococcus abyssi (strain GE5 / Orsay), this protein is Signal recognition particle 54 kDa protein.